Consider the following 395-residue polypeptide: Serine-type anaerobic sulfatase-maturating enzyme (395 aa).

Residues 18 to 249 form the Radical SAM core domain; it reads PRSPVPFHIL…QWRKRCDRGR (232 aa). Residues Cys35 and Cys39 each contribute to the [4Fe-4S] cluster site. S-adenosyl-L-methionine is bound at residue Tyr41. Position 42 (Cys42) interacts with [4Fe-4S] cluster. 2 residues coordinate S-adenosyl-L-methionine: Gly84 and Arg152. 3 residues coordinate [4Fe-4S] cluster: Cys270, Cys276, and Cys291. Asp292 functions as the Proton acceptor in the catalytic mechanism. Cys331, Cys334, Cys340, Cys344, and Cys357 together coordinate [4Fe-4S] cluster.

This sequence belongs to the radical SAM superfamily. Anaerobic sulfatase-maturating enzyme family. Monomer. Interacts with AtsA prior to its export to the periplasm. This interaction depends on the presence of AtsA 'Ser-72'. Binding of SAM to AtsB promotes the formation of a ternary AtsA-AtsB-SAM complex. [4Fe-4S] cluster is required as a cofactor.

The protein localises to the cytoplasm. It catalyses the reaction L-seryl-[sulfatase] + S-adenosyl-L-methionine = 3-oxo-L-alanyl-[sulfatase] + 5'-deoxyadenosine + L-methionine + H(+). It functions in the pathway protein modification; sulfatase oxidation. With respect to regulation, activity is inhibited by iron chelators. Involved in 'Ser-type' sulfatase maturation under anaerobic conditions. Catalyzes the post-translational modification of serine ('Ser-72' in the arylsulfatase AtsA) into 3-oxoalanine (also known as C(alpha)-formylglycine (FGly)), by a free radical chemical mechanism initiated via the reductive cleavage of S-adenosyl-L-methionine (SAM). Is capable of catalyzing multiple turnovers. In vitro, use of a peptide substrate in which the target serine is changed to cysteine also gives rise to turnover, supporting approximately 4-fold the activity of that observed with the natural substrate. In Klebsiella pneumoniae, this protein is Serine-type anaerobic sulfatase-maturating enzyme.